A 202-amino-acid chain; its full sequence is Recombination protein RecR (202 aa).

Residues 57 to 72 form a C4-type zinc finger; the sequence is CRDCRTFTEDDICAVC. The region spanning 81–176 is the Toprim domain; sequence GQICVVESPA…PATRIAHGVP (96 aa).

Belongs to the RecR family.

In terms of biological role, may play a role in DNA repair. It seems to be involved in an RecBC-independent recombinational process of DNA repair. It may act with RecF and RecO. In Photobacterium profundum (strain SS9), this protein is Recombination protein RecR.